The chain runs to 953 residues: Coatomer subunit beta (953 aa).

HEAT repeat units follow at residues 17-54 (DSEPPSEISLKNDLEKGDVKLKTEALKKVIIMILNGEK), 96-131 (QEMILVCDAYRKDLQHPNEFIRGSTLRFLCKLKEAE), 132-168 (LLEPLMPAIRACLEHRHSYVRRNAVLAIYTIYRNFEH), 240-276 (SERARFIRCIYNLLQSSSPAVKYEAAGTLVTLSSAPT), 277-314 (AIKAAAQCYIDLIIKESDNNVKLIVLDRLVELKEHPSH), 316-353 (RVLQDLVMDILRVLSTPDLEVRKKTLQLALDLVSSRNV), and 396-433 (DMAANVIPVLMEFLSDNNEAAAADVLEFVREAIQRFDN).

Oligomeric complex that consists of at least the alpha, beta, beta', gamma, delta, epsilon and zeta subunits.

The protein localises to the cytoplasm. Its subcellular location is the golgi apparatus membrane. The protein resides in the cytoplasmic vesicle. It is found in the COPI-coated vesicle membrane. The coatomer is a cytosolic protein complex that binds to dilysine motifs and reversibly associates with Golgi non-clathrin-coated vesicles, which further mediate biosynthetic protein transport from the ER, via the Golgi up to the trans Golgi network. Coatomer complex is required for budding from Golgi membranes, and is essential for the retrograde Golgi-to-ER transport of dilysine-tagged proteins. This Gallus gallus (Chicken) protein is Coatomer subunit beta (COPB1).